A 714-amino-acid polypeptide reads, in one-letter code: DNA gyrase subunit B (714 aa).

The Toprim domain maps to 492-606 (SELYVVEGDS…NGHVFLAQPP (115 aa)). Residues Glu-498, Asp-571, and Asp-573 each coordinate Mg(2+).

This sequence belongs to the type II topoisomerase GyrB family. In terms of assembly, heterotetramer, composed of two GyrA and two GyrB chains. In the heterotetramer, GyrA contains the active site tyrosine that forms a transient covalent intermediate with DNA, while GyrB binds cofactors and catalyzes ATP hydrolysis. It depends on Mg(2+) as a cofactor. The cofactor is Mn(2+). Ca(2+) is required as a cofactor.

The protein resides in the cytoplasm. It catalyses the reaction ATP-dependent breakage, passage and rejoining of double-stranded DNA.. Its activity is regulated as follows. DNA supercoiling is inhibited by EDTA, novobiocin, coumermycin and ciprofloxacin. In terms of biological role, a type II topoisomerase that negatively supercoils closed circular double-stranded DNA in an ATP-dependent manner and also catalyzes the interconversion of other topological isomers of double-stranded DNA rings, including catenanes and knotted rings. Relaxes negatively supercoiled DNA in an ATP-independent manner. A linear reaction intermediate can be trapped in the presence of the antibiotic ciprofloxacin. Negative supercoiling favors strand separation, and DNA replication, transcription, recombination and repair, all of which involve strand separation. Type II topoisomerases break and join 2 DNA strands simultaneously in an ATP-dependent manner. The chain is DNA gyrase subunit B from Mycobacterium bovis (strain BCG / Pasteur 1173P2).